Here is a 795-residue protein sequence, read N- to C-terminus: Histone acetyltransferase KAT2A (795 aa).

The segment covering 1 to 18 (MADPAAQSSAQPRLQQAQ) has biased composition (polar residues). Residues 1–55 (MADPAAQSSAQPRLQQAQSSGPTGSNSNPGAGSSDPARPGLSQQQWSSQKKAQVR) form a disordered region. Residues 19-34 (SSGPTGSNSNPGAGSS) are compositionally biased toward low complexity. Residues 461 to 614 (VIGNSLSQKS…GATLMECELN (154 aa)) form the N-acetyltransferase domain. Catalysis depends on Glu-533, which acts as the Proton donor/acceptor. Acetyl-CoA is bound by residues 537–539 (CAV), 544–550 (QVKGYGT), and Tyr-575. Succinyl-CoA contacts are provided by residues 537–539 (CAV), 544–550 (QVKGYGT), and Tyr-575. Residues 597 to 606 (LGYIKDYEGA) form a loop 3 region. In terms of domain architecture, Bromo spans 686–790 (KDPDLLYNML…KFFYFKLKEA (105 aa)).

Belongs to the acetyltransferase family. GCN5 subfamily.

The protein resides in the nucleus. It localises to the chromosome. The protein localises to the cytoplasm. It is found in the cytoskeleton. Its subcellular location is the microtubule organizing center. The protein resides in the centrosome. The catalysed reaction is L-lysyl-[histone] + acetyl-CoA = N(6)-acetyl-L-lysyl-[histone] + CoA + H(+). It catalyses the reaction L-lysyl-[protein] + acetyl-CoA = N(6)-acetyl-L-lysyl-[protein] + CoA + H(+). The enzyme catalyses succinyl-CoA + L-lysyl-[protein] = N(6)-succinyl-L-lysyl-[protein] + CoA + H(+). It carries out the reaction glutaryl-CoA + L-lysyl-[protein] = N(6)-glutaryl-L-lysyl-[protein] + CoA + H(+). In terms of biological role, protein lysine acyltransferase that can act as a acetyltransferase, glutaryltransferasesucc, succinyltransferase or malonyltransferase, depending on the context. Acts as a histone lysine succinyltransferase: catalyzes succinylation of histone H3 on 'Lys-79' (H3K79succ), with a maximum frequency around the transcription start sites of genes. Succinylation of histones gives a specific tag for epigenetic transcription activation. Association with the 2-oxoglutarate dehydrogenase complex, which provides succinyl-CoA, is required for histone succinylation. In different complexes, functions either as an acetyltransferase (HAT) or as a succinyltransferase: in the SAGA and ATAC complexes, acts as a histone acetyltransferase. Has significant histone acetyltransferase activity with core histones, but not with nucleosome core particles. Has a a strong preference for acetylation of H3 at 'Lys-9' (H3K9ac). Acetylation of histones gives a specific tag for epigenetic transcription activation. Also acetylates non-histone proteins, such as tbx5. Involved in heart and limb development by mediating acetylation of tbx5. Together with kat2b, required for growth and differentiation of craniofacial cartilage and bone by regulating acetylation of histone H3 at 'Lys-9' (H3K9ac). Also acts as a histone glutaryltransferase: catalyzes glutarylation of histone H4 on 'Lys-91' (H4K91glu), a mark that destabilizes nucleosomes by promoting dissociation of the H2A-H2B dimers from nucleosomes. In Danio rerio (Zebrafish), this protein is Histone acetyltransferase KAT2A.